A 908-amino-acid chain; its full sequence is Protein translocase subunit SecA (908 aa).

ATP-binding positions include Gln90, 108 to 112 (GEGKT), and Asp503. The segment covering 846-864 (AAAAEAPVAPAPQPAAAAP) has biased composition (low complexity). A disordered region spans residues 846 to 884 (AAAAEAPVAPAPQPAAAAPQPTPELVGAEAGEPDPAAWG). Residues Cys892, Cys894, Cys903, and His904 each contribute to the Zn(2+) site.

The protein belongs to the SecA family. In terms of assembly, monomer and homodimer. Part of the essential Sec protein translocation apparatus which comprises SecA, SecYEG and auxiliary proteins SecDF-YajC and YidC. Zn(2+) serves as cofactor.

It is found in the cell inner membrane. The protein localises to the cytoplasm. It carries out the reaction ATP + H2O + cellular proteinSide 1 = ADP + phosphate + cellular proteinSide 2.. In terms of biological role, part of the Sec protein translocase complex. Interacts with the SecYEG preprotein conducting channel. Has a central role in coupling the hydrolysis of ATP to the transfer of proteins into and across the cell membrane, serving both as a receptor for the preprotein-SecB complex and as an ATP-driven molecular motor driving the stepwise translocation of polypeptide chains across the membrane. The polypeptide is Protein translocase subunit SecA (Cereibacter sphaeroides (strain ATCC 17029 / ATH 2.4.9) (Rhodobacter sphaeroides)).